Reading from the N-terminus, the 398-residue chain is Metalloprotease MmpA (398 aa).

Histidine 22 contributes to the Zn(2+) binding site. Glutamate 23 is a catalytic residue. Histidine 26 is a binding site for Zn(2+). The next 3 helical transmembrane spans lie at phenylalanine 117 to valine 139, glutamine 316 to leucine 338, and alanine 362 to tryptophan 381. Positions alanine 130–aspartate 203 constitute a PDZ domain.

Belongs to the peptidase M50B family. Requires Zn(2+) as cofactor.

The protein resides in the cell inner membrane. Functionally, involved in the regulated intramembrane proteolysis (RIP) of the short isoform of PodJ protein (PodJS), during the swarmer-to-stalked transition. The cleavage occurs near or within the single transmembrane of PodJS thereby releasing the N-terminal segment into the cytoplasm for subsequent degradation. It contributes to preserve asymmetry in the next cell cycle through sequential degradation. This is Metalloprotease MmpA (mmpA) from Caulobacter vibrioides (strain ATCC 19089 / CIP 103742 / CB 15) (Caulobacter crescentus).